The chain runs to 253 residues: Imidazole glycerol phosphate synthase subunit HisF (253 aa).

Catalysis depends on residues Asp-11 and Asp-130.

Belongs to the HisA/HisF family. Heterodimer of HisH and HisF.

It localises to the cytoplasm. It catalyses the reaction 5-[(5-phospho-1-deoxy-D-ribulos-1-ylimino)methylamino]-1-(5-phospho-beta-D-ribosyl)imidazole-4-carboxamide + L-glutamine = D-erythro-1-(imidazol-4-yl)glycerol 3-phosphate + 5-amino-1-(5-phospho-beta-D-ribosyl)imidazole-4-carboxamide + L-glutamate + H(+). Its pathway is amino-acid biosynthesis; L-histidine biosynthesis; L-histidine from 5-phospho-alpha-D-ribose 1-diphosphate: step 5/9. In terms of biological role, IGPS catalyzes the conversion of PRFAR and glutamine to IGP, AICAR and glutamate. The HisF subunit catalyzes the cyclization activity that produces IGP and AICAR from PRFAR using the ammonia provided by the HisH subunit. This is Imidazole glycerol phosphate synthase subunit HisF from Roseobacter denitrificans (strain ATCC 33942 / OCh 114) (Erythrobacter sp. (strain OCh 114)).